A 394-amino-acid polypeptide reads, in one-letter code: Cysteine protease ATG4B (394 aa).

The Nucleophile role is filled by C74. Residues D280 and H282 contribute to the active site. The LIR motif lies at 389–392 (FEIL).

This sequence belongs to the peptidase C54 family.

Its subcellular location is the cytoplasm. The protein resides in the cytosol. It is found in the cytoplasmic vesicle. It localises to the autophagosome. The protein localises to the endoplasmic reticulum. Its subcellular location is the mitochondrion. The catalysed reaction is [protein]-C-terminal L-amino acid-glycyl-phosphatidylethanolamide + H2O = [protein]-C-terminal L-amino acid-glycine + a 1,2-diacyl-sn-glycero-3-phosphoethanolamine. It carries out the reaction [protein]-C-terminal L-amino acid-glycyl-phosphatidylserine + H2O = [protein]-C-terminal L-amino acid-glycine + a 1,2-diacyl-sn-glycero-3-phospho-L-serine. Cysteine protease that plays a key role in autophagy by mediating both proteolytic activation and delipidation of ATG8 family proteins. Required for canonical autophagy (macroautophagy), non-canonical autophagy as well as for mitophagy. The protease activity is required for proteolytic activation of ATG8 family proteins: cleaves the C-terminal amino acid of ATG8 proteins to reveal a C-terminal glycine. Exposure of the glycine at the C-terminus is essential for ATG8 proteins conjugation to phosphatidylethanolamine (PE) and insertion to membranes, which is necessary for autophagy. Protease activity is also required to counteract formation of high-molecular weight conjugates of ATG8 proteins (ATG8ylation): acts as a deubiquitinating-like enzyme that removes ATG8 conjugated to other proteins, such as ATG3. In addition to the protease activity, also mediates delipidation of ATG8 family proteins. Catalyzes delipidation of PE-conjugated forms of ATG8 proteins during macroautophagy. Also involved in non-canonical autophagy, a parallel pathway involving conjugation of ATG8 proteins to single membranes at endolysosomal compartments, by catalyzing delipidation of ATG8 proteins conjugated to phosphatidylserine (PS). The chain is Cysteine protease ATG4B from Danio rerio (Zebrafish).